The primary structure comprises 141 residues: Large ribosomal subunit protein uL11 (141 aa).

This sequence belongs to the universal ribosomal protein uL11 family. Part of the ribosomal stalk of the 50S ribosomal subunit. Interacts with L10 and the large rRNA to form the base of the stalk. L10 forms an elongated spine to which L12 dimers bind in a sequential fashion forming a multimeric L10(L12)X complex. One or more lysine residues are methylated.

Its function is as follows. Forms part of the ribosomal stalk which helps the ribosome interact with GTP-bound translation factors. In Coprothermobacter proteolyticus (strain ATCC 35245 / DSM 5265 / OCM 4 / BT), this protein is Large ribosomal subunit protein uL11.